The sequence spans 670 residues: UvrABC system protein B (670 aa).

The Helicase ATP-binding domain occupies 25-412 (EGLEAGLSHQ…AGRVIEQVVR (388 aa)). 38–45 (GVTGSGKT) lines the ATP pocket. A Beta-hairpin motif is present at residues 91–114 (YYDYYQPEAYVPSSDTYIEKDSSI). The region spanning 429-582 (QVDDLLSQIR…QIAFNEAHGI (154 aa)) is the Helicase C-terminal domain. One can recognise a UVR domain in the interval 631-666 (SKRIRQLEEKMYQLARDLEFEAAAQLRDEIQTLRER).

The protein belongs to the UvrB family. As to quaternary structure, forms a heterotetramer with UvrA during the search for lesions. Interacts with UvrC in an incision complex.

The protein localises to the cytoplasm. Its function is as follows. The UvrABC repair system catalyzes the recognition and processing of DNA lesions. A damage recognition complex composed of 2 UvrA and 2 UvrB subunits scans DNA for abnormalities. Upon binding of the UvrA(2)B(2) complex to a putative damaged site, the DNA wraps around one UvrB monomer. DNA wrap is dependent on ATP binding by UvrB and probably causes local melting of the DNA helix, facilitating insertion of UvrB beta-hairpin between the DNA strands. Then UvrB probes one DNA strand for the presence of a lesion. If a lesion is found the UvrA subunits dissociate and the UvrB-DNA preincision complex is formed. This complex is subsequently bound by UvrC and the second UvrB is released. If no lesion is found, the DNA wraps around the other UvrB subunit that will check the other stand for damage. The chain is UvrABC system protein B from Pseudomonas aeruginosa (strain ATCC 15692 / DSM 22644 / CIP 104116 / JCM 14847 / LMG 12228 / 1C / PRS 101 / PAO1).